A 255-amino-acid chain; its full sequence is tRNA (guanine-N(1)-)-methyltransferase (255 aa).

S-adenosyl-L-methionine is bound by residues G113 and 133–138 (IGDYVL).

This sequence belongs to the RNA methyltransferase TrmD family. In terms of assembly, homodimer.

It is found in the cytoplasm. The enzyme catalyses guanosine(37) in tRNA + S-adenosyl-L-methionine = N(1)-methylguanosine(37) in tRNA + S-adenosyl-L-homocysteine + H(+). In terms of biological role, specifically methylates guanosine-37 in various tRNAs. This Serratia proteamaculans (strain 568) protein is tRNA (guanine-N(1)-)-methyltransferase.